Consider the following 336-residue polypeptide: Holliday junction branch migration complex subunit RuvB (336 aa).

The large ATPase domain (RuvB-L) stretch occupies residues 1–182 (MKERIVNLET…FGMSFRMQFY (182 aa)). Residues Leu21, Arg22, Gly63, Lys66, Thr67, Ser68, 129-131 (EDF), Arg172, Tyr182, and Arg219 contribute to the ATP site. Thr67 contributes to the Mg(2+) binding site. A small ATPAse domain (RuvB-S) region spans residues 183–253 (SPSELALIIK…ITLHALNELG (71 aa)). Residues 256–336 (ELGFDEADLA…IPTLKSQTLF (81 aa)) are head domain (RuvB-H). The DNA site is built by Arg310 and Arg315.

Belongs to the RuvB family. In terms of assembly, homohexamer. Forms an RuvA(8)-RuvB(12)-Holliday junction (HJ) complex. HJ DNA is sandwiched between 2 RuvA tetramers; dsDNA enters through RuvA and exits via RuvB. An RuvB hexamer assembles on each DNA strand where it exits the tetramer. Each RuvB hexamer is contacted by two RuvA subunits (via domain III) on 2 adjacent RuvB subunits; this complex drives branch migration. In the full resolvosome a probable DNA-RuvA(4)-RuvB(12)-RuvC(2) complex forms which resolves the HJ.

It is found in the cytoplasm. The catalysed reaction is ATP + H2O = ADP + phosphate + H(+). The RuvA-RuvB-RuvC complex processes Holliday junction (HJ) DNA during genetic recombination and DNA repair, while the RuvA-RuvB complex plays an important role in the rescue of blocked DNA replication forks via replication fork reversal (RFR). RuvA specifically binds to HJ cruciform DNA, conferring on it an open structure. The RuvB hexamer acts as an ATP-dependent pump, pulling dsDNA into and through the RuvAB complex. RuvB forms 2 homohexamers on either side of HJ DNA bound by 1 or 2 RuvA tetramers; 4 subunits per hexamer contact DNA at a time. Coordinated motions by a converter formed by DNA-disengaged RuvB subunits stimulates ATP hydrolysis and nucleotide exchange. Immobilization of the converter enables RuvB to convert the ATP-contained energy into a lever motion, pulling 2 nucleotides of DNA out of the RuvA tetramer per ATP hydrolyzed, thus driving DNA branch migration. The RuvB motors rotate together with the DNA substrate, which together with the progressing nucleotide cycle form the mechanistic basis for DNA recombination by continuous HJ branch migration. Branch migration allows RuvC to scan DNA until it finds its consensus sequence, where it cleaves and resolves cruciform DNA. This chain is Holliday junction branch migration complex subunit RuvB, found in Helicobacter pylori (strain HPAG1).